A 92-amino-acid polypeptide reads, in one-letter code: Small ribosomal subunit protein uS17 (92 aa).

The protein belongs to the universal ribosomal protein uS17 family. In terms of assembly, part of the 30S ribosomal subunit.

One of the primary rRNA binding proteins, it binds specifically to the 5'-end of 16S ribosomal RNA. The sequence is that of Small ribosomal subunit protein uS17 from Corynebacterium glutamicum (strain ATCC 13032 / DSM 20300 / JCM 1318 / BCRC 11384 / CCUG 27702 / LMG 3730 / NBRC 12168 / NCIMB 10025 / NRRL B-2784 / 534).